The sequence spans 342 residues: MKAGIELISHSQASHATYANSMTLAEKGPQRLKRQFKEHSSSKESNVSRWLKIFIRQFDIWFPETIPTMKVRYELLRKNFIKEIFNSRAFIYPFLGFYEVLTNPVYWKHILLFAVCYALIFVTIAGLFYVTLVPLLVTWAILLLGPLGVILVHIQWILQTNVLTAFVCRTLVLTHITNQIFDISLVLQDQDEFLNEVKVLPKPQKPHRKIDEPDAVRNFNTIKGSRIFKIPRLLFRMFFKVSNFTSLTLLSLIPIVGPILANQLMAPKRTFTYLQRYFLLKGFSKKQAKDFQYEHYASFICFGMSAGLLELIPFFTIVTISSNTVGAAKWCTSLLKGERKKE.

Residues 1–109 lie on the Cytoplasmic side of the membrane; the sequence is MKAGIELISH…VLTNPVYWKH (109 aa). A helical transmembrane segment spans residues 110 to 130; sequence ILLFAVCYALIFVTIAGLFYV. Threonine 131 is a topological domain (extracellular). Residues 132–152 traverse the membrane as a helical segment; it reads LVPLLVTWAILLLGPLGVILV. Residues 153-240 lie on the Cytoplasmic side of the membrane; sequence HIQWILQTNV…PRLLFRMFFK (88 aa). A helical membrane pass occupies residues 241-261; sequence VSNFTSLTLLSLIPIVGPILA. Residues 262 to 299 are Extracellular-facing; sequence NQLMAPKRTFTYLQRYFLLKGFSKKQAKDFQYEHYASF. Residues 300-320 traverse the membrane as a helical segment; sequence ICFGMSAGLLELIPFFTIVTI. The Cytoplasmic portion of the chain corresponds to 321-342; the sequence is SSNTVGAAKWCTSLLKGERKKE.

This sequence belongs to the LDS family.

It is found in the prospore membrane. Its subcellular location is the lipid droplet. The protein resides in the spore wall. Functionally, involved in spore wall assembly. May be involved in the modulation of rDNA transcription. The protein is Outer spore wall protein RRT8 of Saccharomyces cerevisiae (strain ATCC 204508 / S288c) (Baker's yeast).